The primary structure comprises 406 residues: Vacuole membrane protein 1 (406 aa).

A disordered region spans residues 1-22; that stretch reads MAENGTDCEQRRVGMPKEQNNG. The Cytoplasmic portion of the chain corresponds to 1–42; that stretch reads MAENGTDCEQRRVGMPKEQNNGSFQDPSFMCNRKRRDREERQ. A helical membrane pass occupies residues 43 to 63; that stretch reads SIVLWRKPLITLQYFILEVLI. Residues 64-76 lie on the Extracellular side of the membrane; the sequence is NLKEWSVRLWHRR. A helical membrane pass occupies residues 77 to 97; that stretch reads MMVVSVLLLLAVLSVAYYIEG. At 98–110 the chain is on the cytoplasmic side; that stretch reads EHQQCVQYIEKKC. Residues 111–131 traverse the membrane as a helical segment; sequence LWCAYWVGLGILSSVGLGTGL. The Extracellular portion of the chain corresponds to 132-250; the sequence is HTFLLYLGPH…ATRAKLTVQN (119 aa). A VTT domain region spans residues 173–316; the sequence is GTEGAISLWT…FVIITFSKHI (144 aa). Residues 251–271 form a helical membrane-spanning segment; it reads LVQKVGFLGILACASIPNPLF. Over 272–273 the chain is Cytoplasmic; the sequence is DL. A helical transmembrane segment spans residues 274 to 294; it reads AGITCGHFLVPFWTFFGATLI. Topologically, residues 295 to 306 are extracellular; sequence GKAIIKMHIQKL. Residues 307-327 form a helical membrane-spanning segment; it reads FVIITFSKHIVEQMVSLIGVI. At 328–363 the chain is on the cytoplasmic side; that stretch reads PSIGPSLQKPFQEYLEAQRKKLHHKGDSGTPQSENW. The chain crosses the membrane as a helical span at residues 364-384; the sequence is LSWAFEKLVIIMVFYFILSII. The Extracellular portion of the chain corresponds to 385 to 406; sequence NSMAQSYAKRVQQKKLSVEKTK.

The protein belongs to the VMP1 family.

It localises to the endoplasmic reticulum-Golgi intermediate compartment membrane. It is found in the cell membrane. Its subcellular location is the vacuole membrane. The protein localises to the endoplasmic reticulum membrane. It catalyses the reaction a 1,2-diacyl-sn-glycero-3-phospho-L-serine(in) = a 1,2-diacyl-sn-glycero-3-phospho-L-serine(out). The catalysed reaction is cholesterol(in) = cholesterol(out). It carries out the reaction a 1,2-diacyl-sn-glycero-3-phosphocholine(in) = a 1,2-diacyl-sn-glycero-3-phosphocholine(out). The enzyme catalyses a 1,2-diacyl-sn-glycero-3-phosphoethanolamine(in) = a 1,2-diacyl-sn-glycero-3-phosphoethanolamine(out). Its function is as follows. Phospholipid scramblase involved in lipid homeostasis and membrane dynamics processes. Has phospholipid scramblase activity toward cholesterol and phosphatidylserine, as well as phosphatidylethanolamine and phosphatidylcholine. Required for autophagosome formation: participates in early stages of autophagosome biogenesis at the endoplasmic reticulum (ER) membrane by reequilibrating the leaflets of the ER as lipids are extracted by atg2 (atg2a or atg2b) to mediate autophagosome assembly. In addition to autophagy, involved in other processes in which phospholipid scramblase activity is required. Modulates ER contacts with lipid droplets, mitochondria and endosomes. The chain is Vacuole membrane protein 1 from Xenopus laevis (African clawed frog).